We begin with the raw amino-acid sequence, 353 residues long: Survival factor 2 (353 aa).

Belongs to the SVF1 family.

It is found in the cytoplasm. The protein localises to the nucleus. The chain is Survival factor 2 (svf2) from Schizosaccharomyces pombe (strain 972 / ATCC 24843) (Fission yeast).